The sequence spans 426 residues: Serine--tRNA ligase (426 aa).

Residue 233–235 (TAE) coordinates L-serine. 264–266 (RRE) contributes to the ATP binding site. Position 287 (glutamate 287) interacts with L-serine. 351–354 (EISS) is a binding site for ATP. Residue serine 386 participates in L-serine binding.

It belongs to the class-II aminoacyl-tRNA synthetase family. Type-1 seryl-tRNA synthetase subfamily. Homodimer. The tRNA molecule binds across the dimer.

The protein resides in the cytoplasm. The catalysed reaction is tRNA(Ser) + L-serine + ATP = L-seryl-tRNA(Ser) + AMP + diphosphate + H(+). The enzyme catalyses tRNA(Sec) + L-serine + ATP = L-seryl-tRNA(Sec) + AMP + diphosphate + H(+). Its pathway is aminoacyl-tRNA biosynthesis; selenocysteinyl-tRNA(Sec) biosynthesis; L-seryl-tRNA(Sec) from L-serine and tRNA(Sec): step 1/1. Functionally, catalyzes the attachment of serine to tRNA(Ser). Is also able to aminoacylate tRNA(Sec) with serine, to form the misacylated tRNA L-seryl-tRNA(Sec), which will be further converted into selenocysteinyl-tRNA(Sec). This Prochlorococcus marinus (strain NATL1A) protein is Serine--tRNA ligase.